Consider the following 342-residue polypeptide: Ferredoxin--NADP reductase (342 aa).

Positions 17, 36, 44, 49, 89, 124, 289, and 330 each coordinate FAD.

This sequence belongs to the ferredoxin--NADP reductase type 2 family. Homodimer. The cofactor is FAD.

It carries out the reaction 2 reduced [2Fe-2S]-[ferredoxin] + NADP(+) + H(+) = 2 oxidized [2Fe-2S]-[ferredoxin] + NADPH. This chain is Ferredoxin--NADP reductase, found in Rhodopseudomonas palustris (strain BisB18).